The chain runs to 128 residues: Centrosomal protein 15 (128 aa).

The protein localises to the cell projection. It is found in the cilium. May play a role in ciliary assembly. This is Centrosomal protein 15 from Homo sapiens (Human).